The chain runs to 414 residues: Serine/arginine-rich splicing factor SR45 (414 aa).

Disordered regions lie at residues 1-95 and 175-414; these read MAKP…KAVQ and LPPR…PRKT. Composition is skewed to low complexity over residues 10 to 34 and 42 to 60; these read SPSV…SRSI and RSLS…GSRS. The Nuclear localization signal 1 signature appears at 62 to 69; it reads PRRGKSPA. At Ser77 the chain carries Phosphoserine. The region spanning 98 to 176 is the RRM domain; the sequence is LVLHVDSLSR…KVVKATFTLP (79 aa). Residues 176-191 are compositionally biased toward low complexity; the sequence is PPRQKVSSPPKPVSAA. A compositionally biased stretch (basic and acidic residues) spans 205–220; that stretch reads DAEKDGGPRRPRETSP. Positions 218 to 219 are required for isoform 1 function in petal development; sequence TS. Residues 228-243 are compositionally biased toward basic residues; that stretch reads PRRRSPLPRRGLSPRR. The Nuclear localization signal 2 signature appears at 229–236; that stretch reads RRRSPLPR. Phosphoserine is present on Ser256. 3 consecutive short sequence motifs (nuclear localization signal) follow at residues 284–291, 318–325, and 338–345; these read PRRYRSPP, PRRLRSPP, and IRRPGRSR. Basic residues-rich tracts occupy residues 285-343 and 352-363; these read RRYR…RPGR and RKGRGPAGRRGR. Low complexity predominate over residues 364–373; that stretch reads SSSYSSSPSP. The Nuclear localization signal 6 motif lies at 373 to 380; sequence PRRIPRKI. A compositionally biased stretch (basic residues) spans 375–394; it reads RIPRKISRSRSPKRPLRGKR. The span at 404–414 shows a compositional bias: pro residues; the sequence is SPPPPPPPRKT.

This sequence belongs to the splicing factor SR family. SR45 subfamily. As to quaternary structure, component of the spliceosome. Interacts with AFC2, U2AF35A, U2AF35B, RNU1, SCL33 and SKIP. The interaction with AFC2 depends on phosphorylation status. Interaction with RNU1 defines initial 5' splice sites and interaction with U2AF35B 3' splice sites in the early stage of spliceosome assembly. Post-translationally, phosphorylated by AFC2. The phosphorylation status regulates intranuclear distribution. As to expression, especially present in actively growing regions and dividing cells. Mostly expressed in roots (primary and secondary root meristem), shoot apical meristem (SAM), leaf primordia, pollen and inflorescence, and, to a lower extent, in leaves, vascular tissue, hydathode and fruits.

It is found in the nucleus speckle. The protein resides in the nucleus. It localises to the nucleoplasm. In terms of biological role, involved in 5' and 3' splicing site selection of introns, and may bridge the 5' and 3' components of the spliceosome. Isoform 1 is required during flower petal development and isoform 2 is involved in root growth. Negatively regulates glucose and abscisic acid (ABA) signaling during early seedling development. Involved in the RNA-directed DNA methylation pathway. Modulates KIN10 stability in response to sugars, probably through the splicing regulation of 5PTASE13, a protein implicated in the proteasomal degradation of KIN10. This Arabidopsis thaliana (Mouse-ear cress) protein is Serine/arginine-rich splicing factor SR45.